The primary structure comprises 378 residues: tRNA N(3)-cytidine methyltransferase METTL2 (378 aa).

Positions 78, 82, 188, 213, 239, 240, and 260 each coordinate S-adenosyl-L-methionine.

It belongs to the methyltransferase superfamily. METL family. Monomer. Interacts with DALRD3.

It is found in the cytoplasm. The catalysed reaction is cytidine(32) in tRNA(Thr) + S-adenosyl-L-methionine = N(3)-methylcytidine(32) in tRNA(Thr) + S-adenosyl-L-homocysteine + H(+). The enzyme catalyses cytidine(32) in tRNA(Arg)(CCU) + S-adenosyl-L-methionine = N(3)-methylcytidine(32) in tRNA(Arg)(CCU) + S-adenosyl-L-homocysteine + H(+). Functionally, S-adenosyl-L-methionine-dependent methyltransferase that mediates N(3)-methylcytidine modification of residue 32 of the tRNA anticodon loop of tRNA(Thr)(UGU) and tRNA(Arg)(CCU). N(3)-methylcytidine methylation by METTL2 requires the N6-threonylcarbamoylation of tRNA (t6A37) by the EKC/KEOPS complex as prerequisite. The sequence is that of tRNA N(3)-cytidine methyltransferase METTL2 (METTL2) from Bos taurus (Bovine).